The primary structure comprises 1382 residues: DNA-directed RNA polymerase subunit beta (1382 aa).

Belongs to the RNA polymerase beta chain family. The RNAP catalytic core consists of 2 alpha, 1 beta, 1 beta' and 1 omega subunit. When a sigma factor is associated with the core the holoenzyme is formed, which can initiate transcription.

The catalysed reaction is RNA(n) + a ribonucleoside 5'-triphosphate = RNA(n+1) + diphosphate. Functionally, DNA-dependent RNA polymerase catalyzes the transcription of DNA into RNA using the four ribonucleoside triphosphates as substrates. This is DNA-directed RNA polymerase subunit beta from Anaplasma marginale (strain Florida).